The sequence spans 397 residues: Probable peptidoglycan glycosyltransferase FtsW (397 aa).

At 1–30 (MYGLEMLEKIKLEYDKWACLTPKNSLYDRT) the chain is on the cytoplasmic side. A helical membrane pass occupies residues 31–51 (LVWLFLSLLMIGFIMVTSASI). The Periplasmic segment spans residues 52–61 (PVSTRLNNDP). Residues 62–82 (FHFAIRDSIYLACSLLAFAFV) form a helical membrane-spanning segment. At 83 to 94 (VKIPMRNWEKYN) the chain is on the cytoplasmic side. Residues 95–115 (VPLFLLSLLFLASVLIFGRSV) form a helical membrane-spanning segment. The Periplasmic portion of the chain corresponds to 116–126 (NGSIRWIQLGP). The chain crosses the membrane as a helical span at residues 127–146 (INFQPAELSKLAIICYFSSF). The Cytoplasmic segment spans residues 147-158 (YVRKYDEMRNRS). The next 2 helical transmembrane spans lie at 159–179 (ASVIRPMVILFLFSSLLLLQP) and 180–200 (DLGSVVVLFVLTFTMLFIMGA). A topological domain (cytoplasmic) is located at residue lysine 201. The helical transmembrane segment at 202–222 (VMQFLLLIVTASVSFILLVLT) threads the bilayer. At 223–280 (SEYRLKRVTSFLDPFADAYGDGFQLSNAQMAFGQGQLWGQGLGNSVQKLEYLPEAHTD) the chain is on the periplasmic side. Residues 281-301 (FVMAVVAEEFGFIGIIFMVVL) form a helical membrane-spanning segment. The Cytoplasmic segment spans residues 302–325 (LLCLSFRAIKISRDALKLEARFRG). A helical membrane pass occupies residues 326 to 346 (FFAFGVAIWVFLQGSVNLGVA). The Periplasmic segment spans residues 347 to 356 (SGALPTKGLT). A helical transmembrane segment spans residues 357 to 377 (FPLVSYGGSSLVIMSVAIAIL). At 378-397 (LRIDYENRLTRVGHAQIKEP) the chain is on the cytoplasmic side.

It belongs to the SEDS family. FtsW subfamily.

Its subcellular location is the cell inner membrane. It carries out the reaction [GlcNAc-(1-&gt;4)-Mur2Ac(oyl-L-Ala-gamma-D-Glu-L-Lys-D-Ala-D-Ala)](n)-di-trans,octa-cis-undecaprenyl diphosphate + beta-D-GlcNAc-(1-&gt;4)-Mur2Ac(oyl-L-Ala-gamma-D-Glu-L-Lys-D-Ala-D-Ala)-di-trans,octa-cis-undecaprenyl diphosphate = [GlcNAc-(1-&gt;4)-Mur2Ac(oyl-L-Ala-gamma-D-Glu-L-Lys-D-Ala-D-Ala)](n+1)-di-trans,octa-cis-undecaprenyl diphosphate + di-trans,octa-cis-undecaprenyl diphosphate + H(+). It participates in cell wall biogenesis; peptidoglycan biosynthesis. Functionally, peptidoglycan polymerase that is essential for cell division. The sequence is that of Probable peptidoglycan glycosyltransferase FtsW from Haemophilus ducreyi (strain 35000HP / ATCC 700724).